The primary structure comprises 126 residues: Fatty acid-binding protein 1, liver (126 aa).

The protein belongs to the calycin superfamily. Fatty-acid binding protein (FABP) family.

It localises to the cytoplasm. Its function is as follows. Binds free fatty acids and their coenzyme A derivatives, bilirubin, and some other small molecules in the cytoplasm. May be involved in intracellular lipid transport. The specificity of axolotl L-FABP differs from that of LB-FABP. This is Fatty acid-binding protein 1, liver from Ambystoma mexicanum (Axolotl).